The chain runs to 659 residues: Pesticidal crystal protein Cry3Ba (659 aa).

Residues 1–41 are disordered; the sequence is MIRMGGRKMNPNNRSEYDTIKVTPNSELPTNHNQYPLADNP. Polar residues predominate over residues 22 to 41; sequence VTPNSELPTNHNQYPLADNP.

It belongs to the delta endotoxin family.

In terms of biological role, promotes colloidosmotic lysis by binding to the midgut epithelial cells of Coleoptera. The polypeptide is Pesticidal crystal protein Cry3Ba (cry3Ba) (Bacillus thuringiensis subsp. tolworthi).